The following is a 368-amino-acid chain: Agmatine deiminase (368 aa).

The Amidino-cysteine intermediate role is filled by cysteine 357.

The protein belongs to the agmatine deiminase family. As to quaternary structure, homodimer.

The enzyme catalyses agmatine + H2O = N-carbamoylputrescine + NH4(+). It functions in the pathway amine and polyamine biosynthesis; putrescine biosynthesis via agmatine pathway; N-carbamoylputrescine from agmatine: step 1/1. In terms of biological role, mediates the hydrolysis of agmatine into N-carbamoylputrescine in the arginine decarboxylase (ADC) pathway of putrescine biosynthesis, a basic polyamine. This chain is Agmatine deiminase, found in Pseudomonas savastanoi pv. phaseolicola (strain 1448A / Race 6) (Pseudomonas syringae pv. phaseolicola (strain 1448A / Race 6)).